The sequence spans 255 residues: MSLLQDIVLIITGSASGIGLATATAALSQGAKILGVDVSWAPVSLTEHASYKFIQANLTHEATPKQVVETCIKEFGRIDGLLNIAGIMDQNSSVDSLTDDMWERCIAINLTAPVKLMREVIPIMRQQKSGSIVNVGSKAATSGAASGVAYTASKHGLMGATKNVAWRYKQEGIRCNAVCPGGVPTGIVQASDPTTWDKDALATMSHIHQAHAADRQEGLGVEAEDIANCLLFLVSSQSKRINGAIIPVDNAWSVI.

The NADP(+) site is built by I11, R118, Y150, K154, and V183. The Proton acceptor role is filled by Y150. K154 serves as the catalytic Lowers pKa of active site Tyr.

It belongs to the short-chain dehydrogenases/reductases (SDR) family.

It participates in secondary metabolite biosynthesis; terpenoid biosynthesis. Functionally, short chain dehydrogenase; part of the gene cluster that mediates the biosynthesis of andrastins, meroterpenoid compounds that exhibit inhibitory activity against ras farnesyltransferase, suggesting that they could be promising leads for antitumor agents. The first step of the pathway is the synthesis of 3,5-dimethylorsellinic acid (DMOA) by the polyketide synthase adrD via condensation of one acetyl-CoA starter unit with 3 malonyl-CoA units and 2 methylations. DMAO is then converted to farnesyl-DMAO by the prenyltransferase adrG. The methyltransferase adrK catalyzes the methylation of the carboxyl group of farnesyl-DMAO to farnesyl-DMAO methyl ester which is further converted to epoxyfarnesyl-DMAO methyl ester by the FAD-dependent monooxygenase adrH. The terpene cyclase adrI then catalyzes the carbon skeletal rearrangement to generate the andrastin E, the first compound in the pathway having the andrastin scaffold, with the tetracyclic ring system. The post-cyclization tailoring enzymes adrF, adrE, adrJ, and adrA, are involved in the conversion of andrastin E into andrastin A. The short chain dehydrogenase adrF is responsible for the oxidation of the C-3 a hydroxyl group of andrastin E to yield the corresponding ketone, andrastin D. The ketoreductase adrE stereoselectively reduces the carbonyl moiety to reverse the stereochemistry of the C-3 position to yield andrastin F. The acetyltransferase adrJ is the acetyltransferase that attaches the acetyl group to the C-3 hydroxyl group of andrastin F to yield andrastin C. Finally, the cytochrome P450 monooxygenase adrA catalyzes two sequential oxidation reactions of the C-23 methyl group, to generate the corresponding alcohol andrastin B, and aldehyde andrastin A. The protein is Short chain dehydrogenase adrF of Penicillium rubens (strain ATCC 28089 / DSM 1075 / NRRL 1951 / Wisconsin 54-1255) (Penicillium chrysogenum).